Reading from the N-terminus, the 323-residue chain is MLGFITRPPHQLLCTGYRLLRTPVLCTQPRPRTMSSSTSWELPLVAVCQVTSTPNKQENFKTCAELVQEAARLGACLAFLPEAFDFIARNPAETLLLSEPLNGDLLGQYSQLARECGIWLSLGGFHERGQDWEQNQKIYNCHVLLNSKGSVVASYRKTHLCDVEIPGQGPMRESNYTKPGGTLEPPVKTPAGKVGLAICYDMRFPELSLKLAQAGAEILTYPSAFGSVTGPAHWEVLLRARAIESQCYVIAAAQCGRHHETRASYGHSMVVDPWGTVVARCSEGPGLCLARIDLHFLQQMRQHLPVFQHRRPDLYGSLGHPLS.

The N-terminal 33 residues, 1 to 33 (MLGFITRPPHQLLCTGYRLLRTPVLCTQPRPRT), are a transit peptide targeting the mitochondrion. A CN hydrolase domain is found at 42-294 (LPLVAVCQVT…PGLCLARIDL (253 aa)). Catalysis depends on E82, which acts as the Proton acceptor. The active-site Proton donor is the K157. C199 (nucleophile) is an active-site residue.

This sequence belongs to the carbon-nitrogen hydrolase superfamily. NIT1/NIT2 family. Expressed in most tissues with higher expression in adult liver and kidney as well as in fetal adrenal gland and skeletal muscle.

The protein localises to the mitochondrion. Its subcellular location is the cytoplasm. It catalyses the reaction N-(4-oxoglutaryl)-L-cysteinylglycine + H2O = L-cysteinylglycine + 2-oxoglutarate. The catalysed reaction is N-(4-carboxy-4-oxobutanoyl)-L-ethylglycylglycine + H2O = N-(2-aminobutanoyl)glycine + 2-oxoglutarate. Functionally, catalyzes the hydrolysis of the amide bond in N-(4-oxoglutarate)-L-cysteinylglycine (deaminated glutathione), a metabolite repair reaction to dispose of the harmful deaminated glutathione. Possesses amidase activity toward deaminated ophthalmate in vitro. Plays a role in cell growth and apoptosis: loss of expression promotes cell growth, resistance to DNA damage stress and increased incidence to NMBA-induced tumors. Has tumor suppressor properties that enhances the apoptotic responsiveness in cancer cells; this effect is additive to the tumor suppressor activity of FHIT. It is also a negative regulator of primary T-cells. This chain is Deaminated glutathione amidase, found in Mus musculus (Mouse).